Reading from the N-terminus, the 127-residue chain is MARVKRAVNAHKKRRVVLERASGYRGQRSRLYRKAKEQLLHSFTYNFRDRKARKGDFRKLWIQRINAAVRAEGITYNRFIQGLHLAGIELDRRALAELAVSDPEAFKAIVEQAKAALPADVNAPKEA.

Belongs to the bacterial ribosomal protein bL20 family.

In terms of biological role, binds directly to 23S ribosomal RNA and is necessary for the in vitro assembly process of the 50S ribosomal subunit. It is not involved in the protein synthesizing functions of that subunit. The polypeptide is Large ribosomal subunit protein bL20 (Bifidobacterium adolescentis (strain ATCC 15703 / DSM 20083 / NCTC 11814 / E194a)).